The chain runs to 869 residues: Protein translocase subunit SecA (869 aa).

ATP-binding positions include Gln-88, 106 to 110 (GEGKT), and Asp-509. Residues 818-840 (QDEGLKFNQREGEDAPAVREKKI) show a composition bias toward basic and acidic residues. The tract at residues 818–869 (QDEGLKFNQREGEDAPAVREKKIPRNSPCPCGSGKKYKDCCGKSGPKKGILA) is disordered. Zn(2+)-binding residues include Cys-846, Cys-848, Cys-857, and Cys-858.

The protein belongs to the SecA family. As to quaternary structure, monomer and homodimer. Part of the essential Sec protein translocation apparatus which comprises SecA, SecYEG and auxiliary proteins SecDF-YajC and YidC. Zn(2+) is required as a cofactor.

It is found in the cell inner membrane. The protein localises to the cytoplasm. It carries out the reaction ATP + H2O + cellular proteinSide 1 = ADP + phosphate + cellular proteinSide 2.. Functionally, part of the Sec protein translocase complex. Interacts with the SecYEG preprotein conducting channel. Has a central role in coupling the hydrolysis of ATP to the transfer of proteins into and across the cell membrane, serving as an ATP-driven molecular motor driving the stepwise translocation of polypeptide chains across the membrane. This Campylobacter curvus (strain 525.92) protein is Protein translocase subunit SecA.